The sequence spans 471 residues: Argininosuccinate lyase (471 aa).

This sequence belongs to the lyase 1 family. Argininosuccinate lyase subfamily.

The protein localises to the cytoplasm. The enzyme catalyses 2-(N(omega)-L-arginino)succinate = fumarate + L-arginine. Its pathway is amino-acid biosynthesis; L-arginine biosynthesis; L-arginine from L-ornithine and carbamoyl phosphate: step 3/3. The chain is Argininosuccinate lyase from Ralstonia nicotianae (strain ATCC BAA-1114 / GMI1000) (Ralstonia solanacearum).